A 619-amino-acid polypeptide reads, in one-letter code: Elongation factor 4 (619 aa).

The tr-type G domain occupies 17–198 (SVIRNFCIIA…RVVRAIPGPE (182 aa)). Residues 29 to 34 (DHGKST) and 145 to 148 (NKID) contribute to the GTP site.

It belongs to the TRAFAC class translation factor GTPase superfamily. Classic translation factor GTPase family. LepA subfamily.

The protein localises to the cell membrane. It catalyses the reaction GTP + H2O = GDP + phosphate + H(+). Required for accurate and efficient protein synthesis under certain stress conditions. May act as a fidelity factor of the translation reaction, by catalyzing a one-codon backward translocation of tRNAs on improperly translocated ribosomes. Back-translocation proceeds from a post-translocation (POST) complex to a pre-translocation (PRE) complex, thus giving elongation factor G a second chance to translocate the tRNAs correctly. Binds to ribosomes in a GTP-dependent manner. The sequence is that of Elongation factor 4 from Micrococcus luteus (strain ATCC 4698 / DSM 20030 / JCM 1464 / CCM 169 / CCUG 5858 / IAM 1056 / NBRC 3333 / NCIMB 9278 / NCTC 2665 / VKM Ac-2230) (Micrococcus lysodeikticus).